We begin with the raw amino-acid sequence, 233 residues long: Large ribosomal subunit protein uL1 (233 aa).

Belongs to the universal ribosomal protein uL1 family. As to quaternary structure, part of the 50S ribosomal subunit.

In terms of biological role, binds directly to 23S rRNA. The L1 stalk is quite mobile in the ribosome, and is involved in E site tRNA release. Its function is as follows. Protein L1 is also a translational repressor protein, it controls the translation of the L11 operon by binding to its mRNA. The sequence is that of Large ribosomal subunit protein uL1 from Thermotoga petrophila (strain ATCC BAA-488 / DSM 13995 / JCM 10881 / RKU-1).